Here is a 562-residue protein sequence, read N- to C-terminus: UPF0649 protein C1442.02 (562 aa).

Phosphoserine occurs at positions 285 and 286. The interval 288-308 is disordered; that stretch reads DEEIAKNADVPAEVDNNSTKA.

Belongs to the UPF0649 family.

It localises to the cytoplasm. Its subcellular location is the nucleus. The protein is UPF0649 protein C1442.02 of Schizosaccharomyces pombe (strain 972 / ATCC 24843) (Fission yeast).